The primary structure comprises 1210 residues: Homeodomain-interacting protein kinase 1 (1210 aa).

Lysine 25 is covalently cross-linked (Glycyl lysine isopeptide (Lys-Gly) (interchain with G-Cter in SUMO); alternate). Lysine 25 is covalently cross-linked (Glycyl lysine isopeptide (Lys-Gly) (interchain with G-Cter in SUMO2); alternate). Glycyl lysine isopeptide (Lys-Gly) (interchain with G-Cter in SUMO2) cross-links involve residues lysine 120 and lysine 124. In terms of domain architecture, Protein kinase spans 190–518; it reads YEVLEFLGRG…PLKTLNHQFV (329 aa). Residues 196 to 204 and lysine 219 each bind ATP; that span reads LGRGTFGQV. The active-site Proton acceptor is the aspartate 315. The tract at residues 835-856 is disordered; the sequence is QQQSSSLPSKKNKQSAPVSSKS. The short motif at 844-847 is the Nuclear localization signal 1 (NLS1) element; the sequence is KKNK. Serine 872 carries the phosphoserine modification. An interaction with TP53 region spans residues 885 to 1093; sequence PVQDQHQPII…FQHGSPLHST (209 aa). A required for localization to nuclear speckles region spans residues 891–998; the sequence is QPIIIPDTPS…PLKTQLGDCT (108 aa). Residues 902-926 form an SUMO interaction motifs (SIM); required for nuclear localization and kinase activity region; the sequence is PVSVITIRSDTDEEEDNKYKPNSSS. The interval 938-981 is disordered; it reads TVNDSPDSDSSLSSPHPTDTLSALRGNSGTLLEGPGRPAADGIG. Low complexity predominate over residues 941 to 959; the sequence is DSPDSDSSLSSPHPTDTLS. Lysine 991 participates in a covalent cross-link: Glycyl lysine isopeptide (Lys-Gly) (interchain with G-Cter in SUMO2). Disordered stretches follow at residues 1046-1069 and 1084-1104; these read LSQN…APRR and FQHG…APAH. Composition is skewed to low complexity over residues 1047-1063 and 1095-1104; these read SQNQ…ERSS and HPHLAPAPAH. Serine 1200 is modified (phosphoserine). Residue lysine 1203 forms a Glycyl lysine isopeptide (Lys-Gly) (interchain with G-Cter in SUMO) linkage.

The protein belongs to the protein kinase superfamily. CMGC Ser/Thr protein kinase family. HIPK subfamily. As to quaternary structure, interacts with Nkx1-2, Nkx2-5, MYB, PARK7, DAXX and p53/TP53. Part of a cytoplasmic complex made of HIPK1, DAB2IP and MAP3K5 in response to TNF. This complex formation promotes MAP3K5-JNK activation and subsequent apoptosis. Phosphorylated and activated by JNK1. Autophosphorylated. Post-translationally, sumoylated. When conjugated it is directed to nuclear speckles. SENP1-mediated desumoylation is mediated by TNF in response to stress stimuli, triggering transient translocation from nucleus to cytoplasm. In terms of tissue distribution, ubiquitously expressed, with high levels in reproductive tissues. Expressed in the epithelial layer of mammary gland, uterus and epididymis, in the corpus luteum, and in post-meiotic round spermatids.

The protein resides in the nucleus. Its subcellular location is the cytoplasm. The protein localises to the nucleus speckle. It carries out the reaction L-seryl-[protein] + ATP = O-phospho-L-seryl-[protein] + ADP + H(+). The enzyme catalyses L-threonyl-[protein] + ATP = O-phospho-L-threonyl-[protein] + ADP + H(+). Serine/threonine-protein kinase involved in transcription regulation and TNF-mediated cellular apoptosis. Plays a role as a corepressor for homeodomain transcription factors. Phosphorylates DAXX and MYB. Phosphorylates DAXX in response to stress, and mediates its translocation from the nucleus to the cytoplasm. Inactivates MYB transcription factor activity by phosphorylation. Prevents MAP3K5-JNK activation in the absence of TNF. TNF triggers its translocation to the cytoplasm in response to stress stimuli, thus activating nuclear MAP3K5-JNK by derepression and promoting apoptosis. May be involved in anti-oxidative stress responses. Involved in the regulation of eye size, lens formation and retinal lamination during late embryogenesis. Promotes angiogenesis and to be involved in erythroid differentiation. May be involved in malignant squamous cell tumor formation. Phosphorylates PAGE4 at 'Thr-51' which is critical for the ability of PAGE4 to potentiate the transcriptional activator activity of JUN. The polypeptide is Homeodomain-interacting protein kinase 1 (Hipk1) (Mus musculus (Mouse)).